Consider the following 207-residue polypeptide: N-(5'-phosphoribosyl)anthranilate isomerase (207 aa).

Belongs to the TrpF family.

The catalysed reaction is N-(5-phospho-beta-D-ribosyl)anthranilate = 1-(2-carboxyphenylamino)-1-deoxy-D-ribulose 5-phosphate. Its pathway is amino-acid biosynthesis; L-tryptophan biosynthesis; L-tryptophan from chorismate: step 3/5. This chain is N-(5'-phosphoribosyl)anthranilate isomerase, found in Legionella pneumophila (strain Lens).